The following is a 246-amino-acid chain: Probable transcriptional regulatory protein CLL_A1008 (246 aa).

This sequence belongs to the TACO1 family.

The protein localises to the cytoplasm. The protein is Probable transcriptional regulatory protein CLL_A1008 of Clostridium botulinum (strain Eklund 17B / Type B).